The chain runs to 71 residues: MELHCPQCQHVLDQDNGHARCRSCGEFIEMKALCPDCHQPLQVLKACGAVDYFCQHGHGLISKKRVEFVLA.

This is an uncharacterized protein from Escherichia coli (strain K12).